A 158-amino-acid chain; its full sequence is Salt stress-responsive protein YocM (158 aa).

Residues 51 to 158 (GKGDASFPSM…GQAKTIVIDD (108 aa)) enclose the sHSP domain.

It belongs to the small heat shock protein (HSP20) family. In terms of assembly, forms homodimers, homotetramers and higher oligomers.

The protein localises to the cytoplasm. Part of the cellular protein quality control system with a specific role in salt stress response. May facilitate protein homeostasis, together with chemical chaperones that accumulate during the salt stress response. Increased levels of YocM protects against both heat and salt stress. In vitro, displays an unusual aggregase chaperone activity. This chain is Salt stress-responsive protein YocM (yocM), found in Bacillus subtilis (strain 168).